Here is a 585-residue protein sequence, read N- to C-terminus: PiggyBac transposable element-derived protein 4 (585 aa).

Positions 1–73 (MSNPRKRSIP…STSSDSGRSM (73 aa)) are disordered. A compositionally biased stretch (acidic residues) spans 25–40 (DSFDESDFSEIDDSDN). Basic and acidic residues predominate over residues 47-61 (EADKIRPLSHLESDG). Residues 62–72 (KSSTSSDSGRS) show a composition bias toward low complexity.

The polypeptide is PiggyBac transposable element-derived protein 4 (PGBD4) (Homo sapiens (Human)).